Consider the following 782-residue polypeptide: MNKKHTLISLAILTALYSQQSLADLHEQCLMGVPKFSGEVVTGDVNALPVYIEADNAEINQPNDATYQGNVDLKQGNRHLLAQSVQVKQSGNQSTPLRMAYVRNGFDYKDNQINMLGKDAEFNLDSHDGNLTNSEYEFVGRQGRGKADNITLHNNYRVMKNATFTSCLHGDNAWAVDASEIRQYVKEEYAEMWHARFKIHGVPVFYTPYLQLPIGDRRRSGLLIPSAGTSSQDGLWYAQPIYWNIAPNYDLTFTPKYMSRRGWQANGEFRYLTSIGEGKVAGEYLGKVRYSEYASDNRKRHLFYWNHNSSFLQNWRLNINYTRVSDKRYFNDFDSIYGRSTDGYANQYARIAYYQPNYNFSLSAHQFQIFDDIVNIGPYRAVPQLDFNYHKYDLANGWLNFKLHSQAVRFDNDSKLMPTAWRFHAEPSLNSLMSNKYGSLNIETKLYATRYEQKKGSGKNAEDVQKTVNRVIPQFKVDLQSVLARDITFLKEYTQTFEPHVQYLYRPYRNQSNIGSTLNNDYLGFGYDSALVQQDYYSLFRDRRYSGLDRISSANQVTLGGTTRFYDIAGEERFNLSAGQIYYLSNSRIDENPANKTPTSSSAWALESNWKISNKWYWRGSYQFDTHTNSTSLANTSLEYNPEKNNLIQLNYRYANQEYIDQNLGKSANAYQQDIQQVGLVVGWEIANNWAVVGRYYQDLALQKPVEQYLGVQYNSCCWAASVGVKRNVTNHQNQTRNEIVYDNSIGITLELRGLGSNDHQSGIQEMLEKGKLPYIRAFSLD.

The N-terminal stretch at 1–23 is a signal peptide; sequence MNKKHTLISLAILTALYSQQSLA.

The protein belongs to the LptD family. Component of the lipopolysaccharide transport and assembly complex. Interacts with LptE and LptA.

It localises to the cell outer membrane. Functionally, together with LptE, is involved in the assembly of lipopolysaccharide (LPS) at the surface of the outer membrane. This is LPS-assembly protein LptD from Haemophilus influenzae (strain ATCC 51907 / DSM 11121 / KW20 / Rd).